A 502-amino-acid chain; its full sequence is Probable zinc metalloprotease MGG_02107 (502 aa).

The first 21 residues, 1 to 21 (MRSPPGAVAALASVAAQLATA), serve as a signal peptide directing secretion. Zn(2+) is bound by residues H182, D202, and E235. Residue N250 is glycosylated (N-linked (GlcNAc...) asparagine). D262 contributes to the Zn(2+) binding site. Positions 284-307 (QGGSPAGESKERAETRASIGGEND) are disordered. 3 N-linked (GlcNAc...) asparagine glycosylation sites follow: N375, N417, and N427. The Fibronectin type-III domain occupies 414–502 (QVRNVTVDTS…KSPATMPFPG (89 aa)).

This sequence belongs to the peptidase M28 family. M28B subfamily. Zn(2+) is required as a cofactor.

Its subcellular location is the secreted. This Pyricularia oryzae (strain 70-15 / ATCC MYA-4617 / FGSC 8958) (Rice blast fungus) protein is Probable zinc metalloprotease MGG_02107.